Here is a 95-residue protein sequence, read N- to C-terminus: CRISPR-associated endoribonuclease Cas2 3 (95 aa).

Asp-7 is a binding site for Mg(2+).

Belongs to the CRISPR-associated endoribonuclease Cas2 protein family. In terms of assembly, homodimer, forms a heterotetramer with a Cas1 homodimer. It depends on Mg(2+) as a cofactor.

Functionally, CRISPR (clustered regularly interspaced short palindromic repeat), is an adaptive immune system that provides protection against mobile genetic elements (viruses, transposable elements and conjugative plasmids). CRISPR clusters contain sequences complementary to antecedent mobile elements and target invading nucleic acids. CRISPR clusters are transcribed and processed into CRISPR RNA (crRNA). Functions as a ssRNA-specific endoribonuclease. Involved in the integration of spacer DNA into the CRISPR cassette. The protein is CRISPR-associated endoribonuclease Cas2 3 of Rhodospirillum rubrum (strain ATCC 11170 / ATH 1.1.1 / DSM 467 / LMG 4362 / NCIMB 8255 / S1).